The chain runs to 303 residues: Recombination-associated protein RdgC (303 aa).

It belongs to the RdgC family.

It is found in the cytoplasm. It localises to the nucleoid. May be involved in recombination. This is Recombination-associated protein RdgC from Salmonella agona (strain SL483).